Consider the following 422-residue polypeptide: Phagosome assembly factor 1 (422 aa).

The protein belongs to the PHAF1 family. As to quaternary structure, interacts with BCAS3; the interaction is requrired for the association with the phagophore.

The protein resides in the cytoplasm. The protein localises to the preautophagosomal structure. Functionally, plays a regulatory role in autophagic activity. In complex with BCAS3, associates with the autophagosome formation site during both non-selective and selective autophagy. The chain is Phagosome assembly factor 1 (Phaf1) from Rattus norvegicus (Rat).